Consider the following 475-residue polypeptide: Deoxyguanosinetriphosphate triphosphohydrolase-like protein (475 aa).

One can recognise an HD domain in the interval 118 to 272; it reads RLTHTLEVAQ…MDLSDDIAYS (155 aa).

The protein belongs to the dGTPase family. Type 2 subfamily.

This chain is Deoxyguanosinetriphosphate triphosphohydrolase-like protein (dgt), found in Bifidobacterium longum (strain NCC 2705).